The primary structure comprises 435 residues: 3-phosphoshikimate 1-carboxyvinyltransferase (435 aa).

Positions 22, 23, and 27 each coordinate 3-phosphoshikimate. Lys-22 contributes to the phosphoenolpyruvate binding site. Gly-95 and Arg-123 together coordinate phosphoenolpyruvate. 4 residues coordinate 3-phosphoshikimate: Ser-168, Gln-170, Asp-319, and Lys-346. Gln-170 provides a ligand contact to phosphoenolpyruvate. Asp-319 acts as the Proton acceptor in catalysis. Arg-350 and Arg-393 together coordinate phosphoenolpyruvate.

The protein belongs to the EPSP synthase family. In terms of assembly, monomer.

The protein resides in the cytoplasm. It carries out the reaction 3-phosphoshikimate + phosphoenolpyruvate = 5-O-(1-carboxyvinyl)-3-phosphoshikimate + phosphate. It functions in the pathway metabolic intermediate biosynthesis; chorismate biosynthesis; chorismate from D-erythrose 4-phosphate and phosphoenolpyruvate: step 6/7. Its function is as follows. Catalyzes the transfer of the enolpyruvyl moiety of phosphoenolpyruvate (PEP) to the 5-hydroxyl of shikimate-3-phosphate (S3P) to produce enolpyruvyl shikimate-3-phosphate and inorganic phosphate. This Chloroflexus aurantiacus (strain ATCC 29364 / DSM 637 / Y-400-fl) protein is 3-phosphoshikimate 1-carboxyvinyltransferase.